Here is a 365-residue protein sequence, read N- to C-terminus: MDTGVIEGGLNVTLTIRLLMHGKEVGSIIGKKGESVKKMREESGARINISEGNCPERIITLAGPTNAIFKAFAMIIDKLEEDISSSMTNSTAASRPPVTLRLVVPASQCGSLIGKGGCKIKEIRESTGAQVQVAGDMLPNSTERAITIAGIPQSIIECVKQICVVMLETLSQSPPKGVTIPYRPKPSSSPVIFAGGQDRYSTGSDSASFPHTTPSMCLNPDLEGPPLEAYTIQGQYAIPQPDLTKLHQLAMQQSHFPMTHGNTGFSGIESSSPEVKGYWGLDASAQTTSHELTIPNDLIGCIIGRQGAKINEIRQMSGAQIKIANPVEGSTDRQVTITGSAASISLAQYLINVRLSSETGGMGSS.

2 consecutive KH domains span residues 13–75 (TLTI…FAMI) and 97–162 (PVTL…VKQI). K115 is covalently cross-linked (Glycyl lysine isopeptide (Lys-Gly) (interchain with G-Cter in SUMO2)). The residue at position 173 (S173) is a Phosphoserine. K185 participates in a covalent cross-link: Glycyl lysine isopeptide (Lys-Gly) (interchain with G-Cter in SUMO2). S189 and S272 each carry phosphoserine. In terms of domain architecture, KH 3 spans 287-351 (TTSHELTIPN…ASISLAQYLI (65 aa)). A Glycyl lysine isopeptide (Lys-Gly) (interchain with G-Cter in SUMO2) cross-link involves residue K322. Phosphoserine is present on residues S364 and S365.

As to quaternary structure, identified in a mRNP complex, at least composed of DHX9, DDX3X, ELAVL1, HNRNPU, IGF2BP1, ILF3, PABPC1, PCBP2, PTBP2, STAU1, STAU2, SYNCRIP and YBX1. Interacts with IFIH1 and RNF135. Interacts with MAVS (via C-terminus) and ITCH (via WW domains). Interacts with CGAS; preventing the formation of liquid-like droplets in which CGAS is activated. In terms of processing, phosphorylated. The non-phosphorylated form(s) exhibited the strongest poly(rC)-binding activity. Post-translationally, (Microbial infection) Proteolytically cleaved by picornavirus proteinase 3CD. Detected in all tissues examined.

It is found in the nucleus. Its subcellular location is the cytoplasm. Single-stranded nucleic acid binding protein that binds preferentially to oligo dC. Major cellular poly(rC)-binding protein. Also binds poly(rU). Acts as a negative regulator of antiviral signaling. Negatively regulates cellular antiviral responses mediated by MAVS signaling. It acts as an adapter between MAVS and the E3 ubiquitin ligase ITCH, therefore triggering MAVS ubiquitination and degradation. Negativeley regulates the cGAS-STING pathway via interaction with CGAS, preventing the formation of liquid-like droplets in which CGAS is activated. Together with PCBP1, required for erythropoiesis, possibly by regulating mRNA splicing. Functionally, (Microbial infection) In case of infection by poliovirus, binds to the viral internal ribosome entry site (IRES) and stimulates the IRES-mediated translation. Also plays a role in initiation of viral RNA replication in concert with the viral protein 3CD. This is Poly(rC)-binding protein 2 from Homo sapiens (Human).